The sequence spans 124 residues: MKTKVGFNRLDRKSSHRKALLRNMVISLFRHEKITSTKAKLSEVKRFAEKLITRAKVDSVHNRREVSKFIHDKYILNKLFTRISPIFKERKGGYTRVIKLGQRYGDAAEMAILELVDKTLEEKQ.

It belongs to the bacterial ribosomal protein bL17 family. In terms of assembly, part of the 50S ribosomal subunit. Contacts protein L32.

This is Large ribosomal subunit protein bL17 from Borrelia turicatae (strain 91E135).